The chain runs to 172 residues: Co-chaperone protein HscB homolog (172 aa).

In terms of domain architecture, J spans 2-69 (NHFELFNLPV…DSRAAYLLAL (68 aa)).

The protein belongs to the HscB family. In terms of assembly, interacts with HscA and stimulates its ATPase activity.

Functionally, co-chaperone involved in the maturation of iron-sulfur cluster-containing proteins. Seems to help targeting proteins to be folded toward HscA. The chain is Co-chaperone protein HscB homolog from Acinetobacter baumannii (strain AB307-0294).